The sequence spans 202 residues: UPF0301 protein mlr7511 (202 aa).

It belongs to the UPF0301 (AlgH) family.

This Mesorhizobium japonicum (strain LMG 29417 / CECT 9101 / MAFF 303099) (Mesorhizobium loti (strain MAFF 303099)) protein is UPF0301 protein mlr7511.